The following is a 287-amino-acid chain: 1-acyl-sn-glycerol-3-phosphate acyltransferase alpha (287 aa).

Positions 1 to 26 are cleaved as a signal peptide; sequence MELWPGAGTLLLLLFLLLLLLLPTLW. Topologically, residues 27-37 are lumenal; it reads FCSPSAKYFFK. The helical transmembrane segment at 38 to 58 threads the bilayer; sequence MAFYNGWILFLAVLAIPVCAV. The Cytoplasmic portion of the chain corresponds to 59–127; that stretch reads RGRNVENMKI…PGHCVPIAKR (69 aa). The short motif at 104-109 is the HXXXXD motif element; that stretch reads HQSSLD. A helical membrane pass occupies residues 128–148; that stretch reads ELLWAGSAGLACWLAGVIFID. Topologically, residues 149 to 192 are lumenal; sequence RKRTGDAISVMSEVAQTLLTQDVRVWVFPEGTRNHNGSMLPFKR. The EGTR motif signature appears at 178-181; that stretch reads EGTR.

The protein belongs to the 1-acyl-sn-glycerol-3-phosphate acyltransferase family.

Its subcellular location is the endoplasmic reticulum membrane. It catalyses the reaction a 1-acyl-sn-glycero-3-phosphate + an acyl-CoA = a 1,2-diacyl-sn-glycero-3-phosphate + CoA. It carries out the reaction 1-(9Z-octadecenoyl)-sn-glycero-3-phosphate + (9Z)-octadecenoyl-CoA = 1,2-di-(9Z-octadecenoyl)-sn-glycero-3-phosphate + CoA. The catalysed reaction is 1-(9Z-octadecenoyl)-sn-glycero-3-phosphate + hexadecanoyl-CoA = 1-(9Z)-octadecenoyl-2-hexadecanoyl-sn-glycero-3-phosphate + CoA. The enzyme catalyses heptadecanoyl-CoA + 1-(9Z-octadecenoyl)-sn-glycero-3-phosphate = 1-(9Z)-octadecenoyl-2-heptadecanoyl-sn-glycero-3-phosphate + CoA. It catalyses the reaction 1-(9Z-octadecenoyl)-sn-glycero-3-phosphate + octadecanoyl-CoA = 1-(9Z-octadecenoyl)-2-octadecanoyl-sn-glycero-3-phosphate + CoA. It carries out the reaction 1-(9Z-octadecenoyl)-sn-glycero-3-phosphate + (9Z,12Z)-octadecadienoyl-CoA = 1-(9Z)-octadecenoyl-2-(9Z,12Z)-octadecadienoyl-sn-glycero-3-phosphate + CoA. The catalysed reaction is 1-(9Z-octadecenoyl)-sn-glycero-3-phosphate + tetradecanoyl-CoA = 1-(9Z)-octadecenoyl-2-tetradecanoyl-sn-glycero-3-phosphate + CoA. The enzyme catalyses pentadecanoyl-CoA + 1-(9Z-octadecenoyl)-sn-glycero-3-phosphate = 1-(9Z)-octadecenoyl-2-pentadecanoyl-sn-glycero-3-phosphate + CoA. It catalyses the reaction 1-hexadecanoyl-sn-glycero-3-phosphate + (9Z)-octadecenoyl-CoA = 1-hexadecanoyl-2-(9Z-octadecenoyl)-sn-glycero-3-phosphate + CoA. It carries out the reaction 1-(9Z,12Z,15Z)-octadecatrienoyl-sn-glycero-3-phosphate + (9Z)-octadecenoyl-CoA = 1-(9Z,12Z,15Z)-octadecatrienoyl-2-(9Z)-octadecenoyl-sn-glycero-3-phosphate + CoA. The catalysed reaction is 1-(6Z,9Z,12Z-octadecatrienoyl)-sn-glycero-3-phosphate + (9Z)-octadecenoyl-CoA = (6Z,9Z,12Z)-octadecatrienoyl-2-(9Z)-octadecenoyl-sn-glycero-3-phosphate + CoA. The enzyme catalyses 1-eicosanoyl-sn-glycero-3-phosphate + (9Z)-octadecenoyl-CoA = 1-eicosanoyl-2-(9Z)-octadecenoyl-sn-glycero-3-phosphate + CoA. It catalyses the reaction 1-tetradecanoyl-sn-glycerol 3-phosphate + (9Z)-octadecenoyl-CoA = 1-tetradecanoyl-2-(9Z)-octadecenoyl-sn-glycero-3-phosphate + CoA. It carries out the reaction 1-(9Z-octadecenoyl)-sn-glycero-3-phosphate + (5Z,8Z,11Z,14Z)-eicosatetraenoyl-CoA = 1-(9Z)-octadecenoyl-2-(5Z,8Z,11Z,14Z)-eicosatetraenoyl-sn-glycero-3-phosphate + CoA. The catalysed reaction is 1-(9Z-octadecenoyl)-sn-glycero-3-phosphate + dodecanoyl-CoA = 1-(9Z)-octadecenoyl-2-dodecanoyl-sn-glycero-3-phosphate + CoA. The enzyme catalyses (6Z)-octadecenoyl-CoA + 1-(9Z-octadecenoyl)-sn-glycero-3-phosphate = 1-(9Z)-octadecenoyl-2-(6Z)-octadecenoyl-sn-glycero-3-phosphate + CoA. It catalyses the reaction (11Z)-octadecenoyl-CoA + 1-(9Z-octadecenoyl)-sn-glycero-3-phosphate = 1-(9Z)-octadecenoyl-2-(11Z)-octadecenoyl-sn-glycero-3-phosphate + CoA. It carries out the reaction (9Z)-hexadecenoyl-CoA + 1-(9Z-octadecenoyl)-sn-glycero-3-phosphate = 1-(9Z-octadecenoyl)-2-(9Z-hexadecenoyl)-sn-glycero-3-phosphate + CoA. The protein operates within phospholipid metabolism; CDP-diacylglycerol biosynthesis; CDP-diacylglycerol from sn-glycerol 3-phosphate: step 2/3. Functionally, converts 1-acyl-sn-glycerol-3-phosphate (lysophosphatidic acid or LPA) into 1,2-diacyl-sn-glycerol-3-phosphate (phosphatidic acid or PA) by incorporating an acyl moiety at the sn-2 position of the glycerol backbone. This chain is 1-acyl-sn-glycerol-3-phosphate acyltransferase alpha (AGPAT1), found in Ovis aries (Sheep).